The following is a 542-amino-acid chain: Protein lin-9 homolog (542 aa).

Position 2 is an N-acetylalanine (Ala-2). A sufficient for interaction with RB1 region spans residues 2–296 (AELDQLPDES…QKQRPSRFFM (295 aa)). Residue Lys-21 forms a Glycyl lysine isopeptide (Lys-Gly) (interchain with G-Cter in SUMO2) linkage. Residues Ser-65 and Ser-95 each carry the phosphoserine modification. Residues Thr-96 and Thr-304 each carry the phosphothreonine modification. 2 positions are modified to phosphoserine: Ser-309 and Ser-321. Residues 354-413 (MIKKEHIKKLREMNTEAEKLKSYSMPISIEFQRRYATIVLELEQLNKDLNKVLHKVQQYC) adopt a coiled-coil conformation.

Belongs to the lin-9 family. As to quaternary structure, component of the DREAM complex (also named LINC complex) at least composed of E2F4, E2F5, LIN9, LIN37, LIN52, LIN54, MYBL1, MYBL2, RBL1, RBL2, RBBP4, TFDP1 and TFDP2. The complex exists in quiescent cells where it represses cell cycle-dependent genes. It dissociates in S phase when LIN9, LIN37, LIN52 and LIN54 form a subcomplex that binds to MYBL2. Interacts with RB1. Expressed in thymus and testis.

It localises to the nucleus. The protein localises to the nucleoplasm. Functionally, acts as a tumor suppressor. Inhibits DNA synthesis. Its ability to inhibit oncogenic transformation is mediated through its association with RB1. Plays a role in the expression of genes required for the G1/S transition. The sequence is that of Protein lin-9 homolog (LIN9) from Homo sapiens (Human).